Here is a 2269-residue protein sequence, read N- to C-terminus: Neuron navigator 3 (2269 aa).

A Calponin-homology (CH) domain is found at 55–162 (SKICKIYTDW…LFFILSRYKQ (108 aa)). Positions 186–207 (TGAAQLSQHKTQDMQSSLTARY) are enriched in polar residues. Disordered stretches follow at residues 186–358 (TGAA…RSML) and 388–532 (SEFG…NKGS). Low complexity predominate over residues 236 to 252 (GSGSNSSKGSSNLNRRS). Polar residues-rich tracts occupy residues 267–291 (ASGN…QQLA) and 305–319 (SKSM…SSML). Pro residues predominate over residues 323-333 (PPSPTSSPTPP). Residues 346–356 (ASKSAPGNQRS) are compositionally biased toward polar residues. A compositionally biased stretch (low complexity) spans 411–432 (PSASAFAPPSKSNNCKNHNNKS). The span at 505–518 (TATSKPAGTQSCVP) shows a compositional bias: polar residues. Residues 644 to 672 (ETRRMRTVKNIADLRQNLEETMSSLRGTQ) adopt a coiled-coil conformation. 6 disordered regions span residues 692 to 737 (GRGL…STTV), 756 to 776 (ASGA…VGPE), 836 to 1036 (VKEM…IPGP), 1050 to 1079 (SGSA…TSLD), 1097 to 1412 (VPLQ…GTTC), and 1461 to 1487 (GGSA…TDEV). 2 stretches are compositionally biased toward polar residues: residues 699–716 (SSRS…SSPR) and 727–737 (PPRSSAGSTTV). Residues 847-860 (DSSSVSSGLSDTLD) show a composition bias toward low complexity. Residues 874–886 (GISSRKSKAAQSN) show a composition bias toward polar residues. Low complexity predominate over residues 919-932 (PSCKWKTSSPSSSC). A compositionally biased stretch (polar residues) spans 939-950 (QKTGLPMSQTGS). Residues 977 to 989 (GKTDDAKASEKGK) show a composition bias toward basic and acidic residues. Positions 1110 to 1137 (SSSGGSSVVSRSGHRSSSSSIDSNVSGK) are enriched in low complexity. Residues 1163-1172 (GRSSPVTINQ) are compositionally biased toward polar residues. Low complexity-rich tracts occupy residues 1185-1202 (GTGL…TQSG) and 1223-1234 (GSKASSKPSSPG). The segment covering 1266–1276 (GSLGSMGGQSG) has biased composition (gly residues). A compositionally biased stretch (low complexity) spans 1292-1305 (SPASSPASGLSLPS). 2 stretches are compositionally biased toward polar residues: residues 1313–1339 (NLSS…SSES) and 1354–1363 (RTGSVKSTLS). Basic and acidic residues predominate over residues 1381–1391 (TSHEEGKEWLR). The span at 1392–1412 (SHSTGGLQDTGSPLSPPGTTC) shows a compositional bias: polar residues. Residues 1499–1586 (SSLYSAQIRK…TDAQTAIQVA (88 aa)) adopt a coiled-coil conformation. Disordered regions lie at residues 1602–1672 (QHSS…PSSP), 1756–1792 (NDRL…SRQS), and 2207–2269 (GYSS…ESAL). Low complexity-rich tracts occupy residues 1605–1623 (SESM…LGSA) and 1765–1792 (TTPA…SRQS). The stretch at 1697–1765 (CECTEAEAEI…NDRLKSSGNT (69 aa)) forms a coiled coil. Residues 2208–2224 (YSSSKDGAASKQVSQSD) show a composition bias toward polar residues.

The protein belongs to the Nav/unc-53 family. Interacts with F-actin.

Its subcellular location is the nucleus outer membrane. The protein resides in the golgi apparatus. The protein localises to the cell projection. It localises to the lamellipodium. It is found in the filopodium. Functionally, involved in liver and heart organogenesis during embryo development. Plays a role in the migration of hepatoblasts from the intestinal endoderm during liver organogenesis; possibly by modulating actin polymerization during hepatoblast outgrowth. May be involved in neuron regeneration. The protein is Neuron navigator 3 (nav3) of Danio rerio (Zebrafish).